The primary structure comprises 533 residues: MAGKRVAVIGAGASGLACIKCCLEEGLEPVCFERTDDIGGLWRFQESPDEGRASIYKSVIINTSKEMMCFSDYPIPDHFPNFMHNSQVLEYFRMYAKEFGLLKYIQFKTTVCSVKKRPDFSTSGQWEVLTECEGKKESAVFDGVLVCTGHHTSAHLPLESFPGIEKFKGQYLHSRDYKNPEKFTGKRVIVIGIGNSGGDLAVEISHTAKQVFLSTRRGAWIMNRVGDHGYPIDILLSSRFSQFLKKITGETIANSFLERKMNQRFDHAMFGLKPKHRALSQHPTVNDDLPNRIISGSVKIKGNVKEFTETAAIFEDGSREDDIDAVIFATGYSFSFPFLEDSVKVVKNKVSLYKKVFPPNLEKPTLAIIGLIQPLGAIMPISELQARWATLVFKGLKTLPSQSEMMTEISQVQEKMAKRYVESQRHTIQGDYIETMEEIADLVGVRPNLLSLAFTDPRLALQLLLGPCTPVHYRLQGRGKWDGARKTILTVEDRIRKPLMTRVTESSNSVTSMMTMGKFMLAIAFLAIAVVYF.

The residue at position 5 (arginine 5) is a Dimethylated arginine. Residues 10–14, glutamate 33, and 41–42 contribute to the FAD site; these read GAGAS and LW. Serine 54 is subject to Phosphoserine. Phosphotyrosine is present on tyrosine 56. Position 58 is a phosphoserine (serine 58). Residue 62 to 63 coordinates FAD; it reads NT. 196-199 provides a ligand contact to NADP(+); the sequence is SGGD. Serine 280 carries the phosphoserine modification. At threonine 284 the chain carries Phosphothreonine. Serine 401 is subject to Phosphoserine. A helical transmembrane segment spans residues 513–533; it reads MMTMGKFMLAIAFLAIAVVYF.

The protein belongs to the FMO family. FAD serves as cofactor. Kidney and liver.

It localises to the microsome membrane. The protein localises to the endoplasmic reticulum membrane. It catalyses the reaction N,N-dimethylaniline + NADPH + O2 + H(+) = N,N-dimethylaniline N-oxide + NADP(+) + H2O. The enzyme catalyses NADPH + O2 + H(+) = H2O2 + NADP(+). It carries out the reaction heptan-2-one + NADPH + O2 + H(+) = pentyl acetate + NADP(+) + H2O. The catalysed reaction is octan-3-one + NADPH + O2 + H(+) = pentyl propanoate + NADP(+) + H2O. It catalyses the reaction octan-3-one + NADPH + O2 + H(+) = ethyl hexanoate + NADP(+) + H2O. The enzyme catalyses hexan-3-one + NADPH + O2 + H(+) = ethyl butanoate + NADP(+) + H2O. It carries out the reaction hexan-3-one + NADPH + O2 + H(+) = propyl propanoate + NADP(+) + H2O. The catalysed reaction is heptan-4-one + NADPH + O2 + H(+) = propyl butanoate + NADP(+) + H2O. It catalyses the reaction (2E)-geranial + NADPH + O2 + H(+) = (1E)-2,6-dimethylhepta-1,5-dien-1-yl formate + NADP(+) + H2O. The enzyme catalyses sulcatone + NADPH + O2 + H(+) = 4-methylpent-3-en-1-yl acetate + NADP(+) + H2O. In terms of biological role, acts as a Baeyer-Villiger monooxygenase on a broad range of substrates. Catalyzes the insertion of an oxygen atom into a carbon-carbon bond adjacent to a carbonyl, which converts ketones to esters. Active on diverse carbonyl compounds, whereas soft nucleophiles are mostly non- or poorly reactive. In contrast with other forms of FMO it is non- or poorly active on 'classical' substrates such as drugs, pesticides, and dietary components containing soft nucleophilic heteroatoms. Able to oxidize drug molecules bearing a carbonyl group on an aliphatic chain, such as nabumetone and pentoxifylline. Also, in the absence of substrates, shows slow but yet significant NADPH oxidase activity. Acts as a positive modulator of cholesterol biosynthesis as well as glucose homeostasis, promoting metabolic aging via pleiotropic effects. This is Flavin-containing monooxygenase 5 (FMO5) from Oryctolagus cuniculus (Rabbit).